A 206-amino-acid chain; its full sequence is MLNKLELLLTKAGIELSLQQKQQLVAYVDMLNKWNKAYNLTSVREPEQMLVRHIMDSIVVSPYLQGHRFIDVGTGPGLPGIPLAIVRPDSHFTLLDSLGKRVRFLRQVQHELDLVNIEPVQSRVEAYSSEPPFDGVISRAFASLKDMVSWCSHLPEPIHGRFYALKGVLPEEELTILPFGISIDSVIKLNVPELEGQRHLVILKSN.

S-adenosyl-L-methionine is bound by residues Gly73, Leu78, Val124 to Glu125, and Arg139.

The protein belongs to the methyltransferase superfamily. RNA methyltransferase RsmG family.

The protein resides in the cytoplasm. It carries out the reaction guanosine(527) in 16S rRNA + S-adenosyl-L-methionine = N(7)-methylguanosine(527) in 16S rRNA + S-adenosyl-L-homocysteine. Functionally, specifically methylates the N7 position of guanine in position 527 of 16S rRNA. The polypeptide is Ribosomal RNA small subunit methyltransferase G (Photorhabdus laumondii subsp. laumondii (strain DSM 15139 / CIP 105565 / TT01) (Photorhabdus luminescens subsp. laumondii)).